We begin with the raw amino-acid sequence, 454 residues long: MALNVVILAAGKGTRMRSDLPKVLHPIAHKSMVQHVIDTAYQVGSDAIQLVYGYGADKLQARLGEQQLNWVLQAEQLGTGHAVAQASANIADDDTVLILYGDVPLIQASTLEALLAAREENGLAILTVNLPNPTGYGRIVREGGSVVGIIEQKDANTEQLAINEINTGIMAAPGKQLKAWLGQLSSDNAQGEYYLTDIVAMAHRDGVAITTAQPESAVEVEGANNRVQLAQLERAYQARAAEKLMLEGANLRDPARIDIRGDVTVGMDVMIDVNVVIEGKVTIGNNVTIGAGVILIDCDISDNAVIKPYSIIESAKVGVDASAGPFARLRPGAELKEDAHIGNFVEMKKAVLGKGSKAGHLAYIGDATIGSGVNIGAGTITCNYDGANKFQTIIEDNVFVGSDTQLVAPVTIGKGATLGAGSTITKDVAENELVITRVKQRHLTGWPRPVKLKK.

Positions Met1–Arg226 are pyrophosphorylase. Residues Leu8–Gly11, Lys22, Gln73, Gly78–Thr79, Tyr100–Asp102, Gly137, Glu151, Asn166, and Asn224 each bind UDP-N-acetyl-alpha-D-glucosamine. Mg(2+) is bound at residue Asp102. Asn224 contributes to the Mg(2+) binding site. Positions Val227–Glu247 are linker. The segment at Gly248–Lys454 is N-acetyltransferase. The UDP-N-acetyl-alpha-D-glucosamine site is built by Arg330 and Lys348. The Proton acceptor role is filled by His360. The UDP-N-acetyl-alpha-D-glucosamine site is built by Tyr363 and Asn374. Acetyl-CoA is bound by residues Ala377, Asn383–Tyr384, Ser402, Ala420, and Arg437.

This sequence in the N-terminal section; belongs to the N-acetylglucosamine-1-phosphate uridyltransferase family. In the C-terminal section; belongs to the transferase hexapeptide repeat family. Homotrimer. The cofactor is Mg(2+).

It is found in the cytoplasm. The catalysed reaction is alpha-D-glucosamine 1-phosphate + acetyl-CoA = N-acetyl-alpha-D-glucosamine 1-phosphate + CoA + H(+). It carries out the reaction N-acetyl-alpha-D-glucosamine 1-phosphate + UTP + H(+) = UDP-N-acetyl-alpha-D-glucosamine + diphosphate. The protein operates within nucleotide-sugar biosynthesis; UDP-N-acetyl-alpha-D-glucosamine biosynthesis; N-acetyl-alpha-D-glucosamine 1-phosphate from alpha-D-glucosamine 6-phosphate (route II): step 2/2. Its pathway is nucleotide-sugar biosynthesis; UDP-N-acetyl-alpha-D-glucosamine biosynthesis; UDP-N-acetyl-alpha-D-glucosamine from N-acetyl-alpha-D-glucosamine 1-phosphate: step 1/1. It functions in the pathway bacterial outer membrane biogenesis; LPS lipid A biosynthesis. Catalyzes the last two sequential reactions in the de novo biosynthetic pathway for UDP-N-acetylglucosamine (UDP-GlcNAc). The C-terminal domain catalyzes the transfer of acetyl group from acetyl coenzyme A to glucosamine-1-phosphate (GlcN-1-P) to produce N-acetylglucosamine-1-phosphate (GlcNAc-1-P), which is converted into UDP-GlcNAc by the transfer of uridine 5-monophosphate (from uridine 5-triphosphate), a reaction catalyzed by the N-terminal domain. The sequence is that of Bifunctional protein GlmU from Shewanella pealeana (strain ATCC 700345 / ANG-SQ1).